We begin with the raw amino-acid sequence, 133 residues long: Large ribosomal subunit protein bL17 (133 aa).

Belongs to the bacterial ribosomal protein bL17 family. As to quaternary structure, part of the 50S ribosomal subunit. Contacts protein L32.

The chain is Large ribosomal subunit protein bL17 from Verminephrobacter eiseniae (strain EF01-2).